The sequence spans 367 residues: Probable dual-specificity RNA methyltransferase RlmN (367 aa).

Residue glutamate 92 is the Proton acceptor of the active site. The Radical SAM core domain occupies 98 to 326; sequence QEYGLSVCVT…YDTLKKNGIN (229 aa). A disulfide bond links cysteine 105 and cysteine 341. [4Fe-4S] cluster contacts are provided by cysteine 112, cysteine 116, and cysteine 119. Residues 164–165, serine 196, 219–221, and asparagine 297 contribute to the S-adenosyl-L-methionine site; these read GE and SLH. The active-site S-methylcysteine intermediate is the cysteine 341.

It belongs to the radical SAM superfamily. RlmN family. [4Fe-4S] cluster serves as cofactor.

The protein resides in the cytoplasm. It carries out the reaction adenosine(2503) in 23S rRNA + 2 reduced [2Fe-2S]-[ferredoxin] + 2 S-adenosyl-L-methionine = 2-methyladenosine(2503) in 23S rRNA + 5'-deoxyadenosine + L-methionine + 2 oxidized [2Fe-2S]-[ferredoxin] + S-adenosyl-L-homocysteine. The enzyme catalyses adenosine(37) in tRNA + 2 reduced [2Fe-2S]-[ferredoxin] + 2 S-adenosyl-L-methionine = 2-methyladenosine(37) in tRNA + 5'-deoxyadenosine + L-methionine + 2 oxidized [2Fe-2S]-[ferredoxin] + S-adenosyl-L-homocysteine. In terms of biological role, specifically methylates position 2 of adenine 2503 in 23S rRNA and position 2 of adenine 37 in tRNAs. The protein is Probable dual-specificity RNA methyltransferase RlmN of Listeria welshimeri serovar 6b (strain ATCC 35897 / DSM 20650 / CCUG 15529 / CIP 8149 / NCTC 11857 / SLCC 5334 / V8).